Reading from the N-terminus, the 252-residue chain is Chitooligosaccharide deacetylase (252 aa).

Mg(2+)-binding residues include His61 and His125.

The protein belongs to the YdjC deacetylase family. ChbG subfamily. Homodimer. The cofactor is Mg(2+).

The protein localises to the cytoplasm. It catalyses the reaction N,N'-diacetylchitobiose + H2O = N-acetyl-beta-D-glucosaminyl-(1-&gt;4)-D-glucosamine + acetate. It carries out the reaction diacetylchitobiose-6'-phosphate + H2O = N'-monoacetylchitobiose-6'-phosphate + acetate. The protein operates within glycan degradation; chitin degradation. Its function is as follows. Involved in the degradation of chitin. ChbG is essential for growth on the acetylated chitooligosaccharides chitobiose and chitotriose but is dispensable for growth on cellobiose and chitosan dimer, the deacetylated form of chitobiose. Deacetylation of chitobiose-6-P and chitotriose-6-P is necessary for both the activation of the chb promoter by the regulatory protein ChbR and the hydrolysis of phosphorylated beta-glucosides by the phospho-beta-glucosidase ChbF. Catalyzes the removal of only one acetyl group from chitobiose-6-P to yield monoacetylchitobiose-6-P, the inducer of ChbR and the substrate of ChbF. The chain is Chitooligosaccharide deacetylase from Escherichia fergusonii (strain ATCC 35469 / DSM 13698 / CCUG 18766 / IAM 14443 / JCM 21226 / LMG 7866 / NBRC 102419 / NCTC 12128 / CDC 0568-73).